The primary structure comprises 233 residues: Large ribosomal subunit protein uL1 (233 aa).

The protein belongs to the universal ribosomal protein uL1 family. Part of the 50S ribosomal subunit.

Functionally, binds directly to 23S rRNA. The L1 stalk is quite mobile in the ribosome, and is involved in E site tRNA release. Its function is as follows. Protein L1 is also a translational repressor protein, it controls the translation of the L11 operon by binding to its mRNA. This Thermotoga sp. (strain RQ2) protein is Large ribosomal subunit protein uL1.